The primary structure comprises 388 residues: 3-ketoacyl-CoA thiolase (388 aa).

C91 serves as the catalytic Acyl-thioester intermediate. Catalysis depends on proton acceptor residues H343 and C373.

This sequence belongs to the thiolase-like superfamily. Thiolase family. In terms of assembly, heterotetramer of two alpha chains (FadB) and two beta chains (FadA).

The protein localises to the cytoplasm. The enzyme catalyses an acyl-CoA + acetyl-CoA = a 3-oxoacyl-CoA + CoA. It participates in lipid metabolism; fatty acid beta-oxidation. Its function is as follows. Catalyzes the final step of fatty acid oxidation in which acetyl-CoA is released and the CoA ester of a fatty acid two carbons shorter is formed. This is 3-ketoacyl-CoA thiolase from Photorhabdus laumondii subsp. laumondii (strain DSM 15139 / CIP 105565 / TT01) (Photorhabdus luminescens subsp. laumondii).